Reading from the N-terminus, the 252-residue chain is Type III pantothenate kinase (252 aa).

6–13 (DVGNTHTT) serves as a coordination point for ATP. 104 to 107 (GADR) provides a ligand contact to substrate. The active-site Proton acceptor is the aspartate 106. Aspartate 126 contacts K(+). Threonine 129 provides a ligand contact to ATP. Threonine 180 contacts substrate.

Belongs to the type III pantothenate kinase family. Homodimer. Requires NH4(+) as cofactor. K(+) is required as a cofactor.

It localises to the cytoplasm. The catalysed reaction is (R)-pantothenate + ATP = (R)-4'-phosphopantothenate + ADP + H(+). Its pathway is cofactor biosynthesis; coenzyme A biosynthesis; CoA from (R)-pantothenate: step 1/5. In terms of biological role, catalyzes the phosphorylation of pantothenate (Pan), the first step in CoA biosynthesis. In Fervidobacterium nodosum (strain ATCC 35602 / DSM 5306 / Rt17-B1), this protein is Type III pantothenate kinase.